The chain runs to 697 residues: Long-chain-fatty-acid--CoA ligase 6 (697 aa).

A helical; Signal-anchor for type III membrane protein membrane pass occupies residues 25–45 (LSATTLVSVGALAAVLAYWLT). The Cytoplasmic portion of the chain corresponds to 46–697 (HRPKALQPPC…QIEELYLVSV (652 aa)).

It belongs to the ATP-dependent AMP-binding enzyme family. Mg(2+) is required as a cofactor.

The protein localises to the mitochondrion outer membrane. It localises to the peroxisome membrane. It is found in the microsome membrane. Its subcellular location is the endoplasmic reticulum membrane. The enzyme catalyses a long-chain fatty acid + ATP + CoA = a long-chain fatty acyl-CoA + AMP + diphosphate. The catalysed reaction is (5Z,8Z,11Z,14Z)-eicosatetraenoate + ATP + CoA = (5Z,8Z,11Z,14Z)-eicosatetraenoyl-CoA + AMP + diphosphate. It catalyses the reaction 15-hydroxy-(5Z,8Z,11Z,13E)-eicosatetraenoate + ATP + CoA = 15-hydroxy-(5Z,8Z,11Z,13E)-eicosatetraenoyl-CoA + AMP + diphosphate. It carries out the reaction 12-hydroxy-(5Z,8Z,10E,14Z)-eicosatetraenoate + ATP + CoA = 12-hydroxy-(5Z,8Z,10E,14Z)-eicosatetraenoyl-CoA + AMP + diphosphate. The enzyme catalyses 5-hydroxy-(6E,8Z,11Z,14Z)-eicosatetraenoate + ATP + CoA = 5-hydroxy-(6E,8Z,11Z,14Z)-eicosatetraenoyl-CoA + AMP + diphosphate. The catalysed reaction is hexadecanoate + ATP + CoA = hexadecanoyl-CoA + AMP + diphosphate. It catalyses the reaction (E)-hexadec-2-enoate + ATP + CoA = (2E)-hexadecenoyl-CoA + AMP + diphosphate. In terms of biological role, catalyzes the conversion of long-chain fatty acids to their active form acyl-CoA for both synthesis of cellular lipids, and degradation via beta-oxidation. Plays an important role in fatty acid metabolism in brain and the acyl-CoAs produced may be utilized exclusively for the synthesis of the brain lipid. This is Long-chain-fatty-acid--CoA ligase 6 (Acsl6) from Mus musculus (Mouse).